The primary structure comprises 610 residues: Probable indole-3-acetic acid-amido synthetase GH3.1 (610 aa).

Belongs to the IAA-amido conjugating enzyme family. As to expression, expressed in flowers.

May catalyze the synthesis of indole-3-acetic acid (IAA)-amino acid conjugates, providing a mechanism for the plant to cope with the presence of excess auxin. This Oryza sativa subsp. japonica (Rice) protein is Probable indole-3-acetic acid-amido synthetase GH3.1 (GH3.1).